Here is a 632-residue protein sequence, read N- to C-terminus: 1-deoxy-D-xylulose-5-phosphate synthase (632 aa).

Residues His73 and 114–116 (SHA) each bind thiamine diphosphate. Position 146 (Asp146) interacts with Mg(2+). Thiamine diphosphate is bound by residues 147–148 (GA), Asn176, Tyr287, and Glu368. Asn176 contacts Mg(2+).

The protein belongs to the transketolase family. DXPS subfamily. Homodimer. It depends on Mg(2+) as a cofactor. Thiamine diphosphate is required as a cofactor.

The enzyme catalyses D-glyceraldehyde 3-phosphate + pyruvate + H(+) = 1-deoxy-D-xylulose 5-phosphate + CO2. It participates in metabolic intermediate biosynthesis; 1-deoxy-D-xylulose 5-phosphate biosynthesis; 1-deoxy-D-xylulose 5-phosphate from D-glyceraldehyde 3-phosphate and pyruvate: step 1/1. Its function is as follows. Catalyzes the acyloin condensation reaction between C atoms 2 and 3 of pyruvate and glyceraldehyde 3-phosphate to yield 1-deoxy-D-xylulose-5-phosphate (DXP). This Corynebacterium glutamicum (strain R) protein is 1-deoxy-D-xylulose-5-phosphate synthase.